A 1451-amino-acid polypeptide reads, in one-letter code: Dicer-like protein 2 (1451 aa).

Positions 34–53 (YDGHLSEEDSPGGKPRPKEQ) are disordered. In terms of domain architecture, Helicase ATP-binding spans 70–247 (MLEASLKENI…LKRLESTLDA (178 aa)). 83–90 (MDTGSGKT) serves as a coordination point for ATP. Positions 190 to 193 (DEAH) match the DEAH box motif. Residues 412–582 (KVQRIIEVLL…RLEAIENSEA (171 aa)) enclose the Helicase C-terminal domain. One can recognise a Dicer dsRNA-binding fold domain in the interval 603–704 (AKSHLQHFVS…LPLRDRLELE (102 aa)). RNase III domains are found at residues 968–1111 (AAEL…VDGG) and 1153–1351 (LQLL…VDAG). Glutamate 1192 lines the Mg(2+) pocket. Residues 1253–1272 (EGDSDSKSSGDSTSDKASPR) form a disordered region. Mg(2+)-binding residues include aspartate 1337 and glutamate 1340.

Belongs to the helicase family. Dicer subfamily. Mg(2+) is required as a cofactor. Requires Mn(2+) as cofactor.

Functionally, dicer-like endonuclease involved in cleaving double-stranded RNA in the RNA interference (RNAi) pathway. Produces 21 to 25 bp dsRNAs (siRNAs) which target the selective destruction of homologous RNAs leading to sequence-specific suppression of gene expression, called post-transcriptional gene silencing (PTGS). Part of a broad host defense, DCL-2 is involved in antiviral defense against mycoviruses like the hypovirus CHV1-EP713 and the reovirus MyRV1-Cp9B21. The sequence is that of Dicer-like protein 2 (DCL-2) from Cryphonectria parasitica (Chestnut blight fungus).